A 192-amino-acid polypeptide reads, in one-letter code: MNFLLTWIHWGLAALLYFHNAKVLQAAPAHGDGDRQQSEVIPFMTVYERSVCRPIETMVDIFQEYPDEVEYILKPPCVALMRCGGCCNDEALECVPTELYNVTMEIMKLKPYQSQHIHPMSFQQHSKCECRPKKETRIIQENHCEPCSERRKHLYKQDPLTCKCSCKFTDSRCKSKQLELNERTCRCEKPRR.

Positions 1 to 26 (MNFLLTWIHWGLAALLYFHNAKVLQA) are cleaved as a signal peptide. Cystine bridges form between cysteine 52/cysteine 94, cysteine 83/cysteine 128, and cysteine 87/cysteine 130. The N-linked (GlcNAc...) asparagine glycan is linked to asparagine 101.

It belongs to the PDGF/VEGF growth factor family. Homodimer; disulfide-linked. Also found as heterodimer with PGF. Interacts with FLT1/VEGFR1 and KDR/VEGFR2 receptors, heparan sulfate and heparin. In terms of tissue distribution, expressed by the venom gland, and probably other tissues.

Its subcellular location is the secreted. In terms of biological role, growth factor active in angiogenesis, vasculogenesis and endothelial cell growth. Induces endothelial cell proliferation, promotes cell migration, inhibits apoptosis and induces permeabilization of blood vessels. The protein is Vascular endothelial growth factor A of Agkistrodon piscivorus piscivorus (Eastern cottonmouth).